The following is a 183-amino-acid chain: Probable GTP-binding protein EngB (183 aa).

In terms of domain architecture, EngB-type G spans 17–183 (DYPEVVFVGR…KKELLSRILN (167 aa)). Residues 25-32 (GRSNVGKS), 51-55 (GRTRA), 69-72 (DVPG), 137-140 (TKID), and 166-168 (SSA) contribute to the GTP site. Residues Ser-32 and Thr-53 each contribute to the Mg(2+) site.

The protein belongs to the TRAFAC class TrmE-Era-EngA-EngB-Septin-like GTPase superfamily. EngB GTPase family. Requires Mg(2+) as cofactor.

Necessary for normal cell division and for the maintenance of normal septation. This chain is Probable GTP-binding protein EngB, found in Aquifex aeolicus (strain VF5).